The following is a 132-amino-acid chain: Salivary cystatin-L2 (132 aa).

The N-terminal stretch at 1–18 (MTSSLALVLVFGGAAVCA) is a signal peptide. The Cystatin domain occupies 28–117 (ERSNQDDPEY…RTCTTVIYRN (90 aa)). The interval 87-131 (TCELTSTYNKDTCQANANAAQRTCTTVIYRNLQGEKSISSFECAA) is required for interaction with mouse ANXA2. 2 cysteine pairs are disulfide-bonded: Cys-88–Cys-99 and Cys-110–Cys-129.

The protein belongs to the cystatin family. In terms of assembly, monomer. Interacts (via loop 2) with mouse ANXA2; the interaction results in reduced activation of mouse NLRC4 inflammasome formation upon Anaplasma phagocytophilum infection. As to expression, detected in salivary gland and midgut.

The protein resides in the secreted. In terms of biological role, contributes to the suppression of the host's immune response to tick salivary proteins and is important for successful feeding on hosts. Inhibitor of cysteine proteinases. Inhibits host immune responses, probably via its inhibition of host cathepsins. Inhibits host papain (in vitro). Inhibits host cathepsin L (CTSL) (in vitro). Inhibits host cathepsin L2 (CTSV) (in vitro). Attenuates IFN-beta (IFNB1)-triggered JAK/STAT signaling pathway in mouse dendritic cells. Suppresses induction of interferon-stimulated gene IRF7 and production of CXCL10 in lipopolysaccharide (LPS)-activated dendritic cells. Its function is as follows. (Microbial infection) Down-regulates TLR2-mediated host responses to infection by Borrelia burgdorferi and the production of chemokines CCL3 and CXCL10 by host dendritic cells. Enhances infection by the tick-transmitted pathogen B.burgdorferi (in vitro). (Microbial infection) Inhibits host inflammatory responses to Anaplasma phagocytophilum infection. Interacts with mouse ANXA2 and suppresses oligomerization of NLRC4, a key component of host inflammasomes that sense A.phagocytophilum infection. Indirectly targets caspase-1 (CASP1) activation and subsequent IL-1beta (IL1B) and IL18 release by inhibiting reactive oxygen species (ROS) production from NADPH oxidase complex in A.phagocytophilum-infected mouse macrophages. Functionally, (Microbial infection) Promotes replication of tick-borne encephalitis virus in mouse dendritic cells and reduces anti-viral effect of host IFN-beta (IFNB1). The chain is Salivary cystatin-L2 from Ixodes scapularis (Black-legged tick).